We begin with the raw amino-acid sequence, 416 residues long: Putative serine protease HhoB (416 aa).

An N-terminal signal peptide occupies residues 1–25; the sequence is MAIHLKASHLGVAVLLLLFGGAIGA. Residues 35–53 show a composition bias toward polar residues; sequence GQNHSSPDSPVNTSPQSLT. Residues 35-57 are disordered; that stretch reads GQNHSSPDSPVNTSPQSLTPAPV. A PDZ domain is found at 320–398; the sequence is EMTKQLRTSG…PLAIAVKRGQ (79 aa).

It belongs to the peptidase S1C family.

Functionally, a putative protease, its function overlaps that of the related putative proteases HtrA and HhoA. The chain is Putative serine protease HhoB (hhoB) from Synechocystis sp. (strain ATCC 27184 / PCC 6803 / Kazusa).